The following is a 395-amino-acid chain: Phosphopentomutase (395 aa).

6 residues coordinate Mn(2+): Asp14, Asp289, His294, Asp330, His331, and His342.

Belongs to the phosphopentomutase family. Mn(2+) serves as cofactor.

The protein resides in the cytoplasm. It carries out the reaction 2-deoxy-alpha-D-ribose 1-phosphate = 2-deoxy-D-ribose 5-phosphate. It catalyses the reaction alpha-D-ribose 1-phosphate = D-ribose 5-phosphate. It participates in carbohydrate degradation; 2-deoxy-D-ribose 1-phosphate degradation; D-glyceraldehyde 3-phosphate and acetaldehyde from 2-deoxy-alpha-D-ribose 1-phosphate: step 1/2. Isomerase that catalyzes the conversion of deoxy-ribose 1-phosphate (dRib-1-P) and ribose 1-phosphate (Rib-1-P) to deoxy-ribose 5-phosphate (dRib-5-P) and ribose 5-phosphate (Rib-5-P), respectively. In Mycoplasmopsis pulmonis (strain UAB CTIP) (Mycoplasma pulmonis), this protein is Phosphopentomutase.